The following is a 93-amino-acid chain: Small ribosomal subunit protein uS19 (93 aa).

The protein belongs to the universal ribosomal protein uS19 family.

Protein S19 forms a complex with S13 that binds strongly to the 16S ribosomal RNA. This is Small ribosomal subunit protein uS19 from Alkaliphilus metalliredigens (strain QYMF).